We begin with the raw amino-acid sequence, 333 residues long: NADH dehydrogenase (ubiquinone) complex I, assembly factor 6 (333 aa).

The N-terminal 44 residues, 1-44 (MAASAHGSVWGPLRLGIPGLCCRRPPLGLYARMRRLPGPEVSGR), are a transit peptide targeting the mitochondrion.

It belongs to the NDUFAF6 family. Widely expressed. A lower expression is observed in lung and kidney compared to heart, muscle and liver. In the kidney, expression is high in the basal zone of the proximal tubular cells.

It is found in the mitochondrion inner membrane. The protein resides in the cytoplasm. The protein localises to the nucleus. Its function is as follows. Involved in the assembly of mitochondrial NADH:ubiquinone oxidoreductase complex (complex I) at early stages. May play a role in the biogenesis of complex I subunit MT-ND1. The chain is NADH dehydrogenase (ubiquinone) complex I, assembly factor 6 (NDUFAF6) from Homo sapiens (Human).